Reading from the N-terminus, the 187-residue chain is MGSGKPPLILASGSPRRKALLEALGYPIRVAVPGVEEEGLPLPPKALAQALARRKGEAVQGEWVLAADTVVDLDGEVLGKPKDPEENRLFLRRLSGRPHLVHTAFYLRTPKEVVEEVHTAKVFFRPLSEEEIAWYVGSGEGLDKAGGYGAQGLGMALLERVEGDFYTVVGLPVSRVFALLWARGFRP.

Asp-68 functions as the Proton acceptor in the catalytic mechanism.

The protein belongs to the Maf family. YhdE subfamily. A divalent metal cation is required as a cofactor.

The protein resides in the cytoplasm. It carries out the reaction dTTP + H2O = dTMP + diphosphate + H(+). It catalyses the reaction UTP + H2O = UMP + diphosphate + H(+). In terms of biological role, nucleoside triphosphate pyrophosphatase that hydrolyzes dTTP and UTP. May have a dual role in cell division arrest and in preventing the incorporation of modified nucleotides into cellular nucleic acids. This chain is dTTP/UTP pyrophosphatase, found in Thermus thermophilus (strain ATCC BAA-163 / DSM 7039 / HB27).